The primary structure comprises 190 residues: Shikimate kinase (190 aa).

14–19 (GAGKST) is an ATP binding site. Serine 18 serves as a coordination point for Mg(2+). The substrate site is built by aspartate 36, arginine 60, and glycine 82. Position 120 (arginine 120) interacts with ATP. Residue arginine 139 participates in substrate binding.

This sequence belongs to the shikimate kinase family. As to quaternary structure, monomer. Mg(2+) is required as a cofactor.

The protein localises to the cytoplasm. It carries out the reaction shikimate + ATP = 3-phosphoshikimate + ADP + H(+). It participates in metabolic intermediate biosynthesis; chorismate biosynthesis; chorismate from D-erythrose 4-phosphate and phosphoenolpyruvate: step 5/7. Its function is as follows. Catalyzes the specific phosphorylation of the 3-hydroxyl group of shikimic acid using ATP as a cosubstrate. This is Shikimate kinase from Thioalkalivibrio sulfidiphilus (strain HL-EbGR7).